A 99-amino-acid chain; its full sequence is Large ribosomal subunit protein bL27 (99 aa).

Residues 1–12 (MMINNLEALKLF) constitute a propeptide that is removed on maturation. Positions 15–36 (HKGGGSTANGRNSAGRRLGAKR) are disordered.

This sequence belongs to the bacterial ribosomal protein bL27 family. The N-terminus is cleaved by ribosomal processing cysteine protease Prp.

The chain is Large ribosomal subunit protein bL27 from Lactobacillus johnsonii (strain CNCM I-12250 / La1 / NCC 533).